Here is a 30-residue protein sequence, read N- to C-terminus: Cycloviolacin-O2 (30 aa).

A cross-link (cyclopeptide (Gly-Asn)) is located at residues 1-30; it reads GIPCGESCVWIPCISSAIGCSCKSKVCYRN. Disulfide bonds link Cys-4–Cys-20, Cys-8–Cys-22, and Cys-13–Cys-27.

This is a cyclic peptide.

Probably participates in a plant defense mechanism. The polypeptide is Cycloviolacin-O2 (Viola biflora (Yellow wood violet)).